The following is an 853-amino-acid chain: uncharacterized protein (853 aa).

2 coiled-coil regions span residues 313–343 (RTDEDFKEAAKKREESEKRMNKMLENRLKVA) and 480–528 (EGQV…SELI).

This is an uncharacterized protein from Ostreid herpesvirus 1 (isolate France) (OsHV-1).